Here is a 585-residue protein sequence, read N- to C-terminus: Aspartate--tRNA ligase (585 aa).

Glu173 lines the L-aspartate pocket. The tract at residues 197–200 (QTLK) is aspartate. Arg219 is a binding site for L-aspartate. Residues 219 to 221 (RDE) and Gln228 contribute to the ATP site. His446 contributes to the L-aspartate binding site. Glu480 serves as a coordination point for ATP. Residue Arg487 participates in L-aspartate binding. 532–535 (GLDR) provides a ligand contact to ATP.

This sequence belongs to the class-II aminoacyl-tRNA synthetase family. Type 1 subfamily. In terms of assembly, homodimer.

It localises to the cytoplasm. The enzyme catalyses tRNA(Asp) + L-aspartate + ATP = L-aspartyl-tRNA(Asp) + AMP + diphosphate. Functionally, catalyzes the attachment of L-aspartate to tRNA(Asp) in a two-step reaction: L-aspartate is first activated by ATP to form Asp-AMP and then transferred to the acceptor end of tRNA(Asp). This is Aspartate--tRNA ligase from Bacteroides fragilis (strain ATCC 25285 / DSM 2151 / CCUG 4856 / JCM 11019 / LMG 10263 / NCTC 9343 / Onslow / VPI 2553 / EN-2).